We begin with the raw amino-acid sequence, 1366 residues long: DNA-directed RNA polymerase subunit beta'' (1366 aa).

Residues cysteine 220, cysteine 290, cysteine 297, and cysteine 300 each coordinate Zn(2+).

Belongs to the RNA polymerase beta' chain family. RpoC2 subfamily. As to quaternary structure, in plastids the minimal PEP RNA polymerase catalytic core is composed of four subunits: alpha, beta, beta', and beta''. When a (nuclear-encoded) sigma factor is associated with the core the holoenzyme is formed, which can initiate transcription. The cofactor is Zn(2+).

Its subcellular location is the plastid. It localises to the chloroplast. It catalyses the reaction RNA(n) + a ribonucleoside 5'-triphosphate = RNA(n+1) + diphosphate. Its function is as follows. DNA-dependent RNA polymerase catalyzes the transcription of DNA into RNA using the four ribonucleoside triphosphates as substrates. The polypeptide is DNA-directed RNA polymerase subunit beta'' (Lemna minor (Common duckweed)).